A 479-amino-acid chain; its full sequence is Something about silencing protein 10 (479 aa).

The segment covering 1-10 has biased composition (basic residues); the sequence is MVGRSRRRGA. Disordered regions lie at residues 1 to 45 and 62 to 166; these read MVGR…SYYQ and KGWN…EEAQ. Residue R8 is modified to Omega-N-methylarginine. The span at 11 to 21 shows a compositional bias: low complexity; that stretch reads AKWAAVRAKAG. S37 carries the post-translational modification Phosphoserine. Residues 69-111 are compositionally biased toward acidic residues; the sequence is SGDEEDGEEEEEEVLALDMDDEDDEDGGNAGEEEEEENADDDG. K144 carries the N6-acetyllysine; alternate modification. K144 is covalently cross-linked (Glycyl lysine isopeptide (Lys-Gly) (interchain with G-Cter in SUMO2); alternate). S150 is subject to Phosphoserine. Over residues 153 to 165 the composition is skewed to acidic residues; that stretch reads EAEEEEREEEEEA. T362 carries the phosphothreonine modification. S365 and S368 each carry phosphoserine. R385 bears the Citrulline mark. The segment at 419–466 is disordered; the sequence is RGLTPRRKKIDRNPRVKHREKFRRAKIRRRGQVREVRKEEQRYSGELS. The span at 422 to 449 shows a compositional bias: basic residues; sequence TPRRKKIDRNPRVKHREKFRRAKIRRRG. Basic and acidic residues predominate over residues 450-461; the sequence is QVREVRKEEQRY.

The protein belongs to the SAS10 family. As to quaternary structure, part of the small subunit (SSU) processome, composed of more than 70 proteins and the RNA chaperone small nucleolar RNA (snoRNA) U3. Post-translationally, citrullinated by PADI4.

The protein localises to the nucleus. It is found in the nucleolus. Its function is as follows. Essential for gene silencing: has a role in the structure of silenced chromatin. Plays a role in the developing brain. Part of the small subunit (SSU) processome, first precursor of the small eukaryotic ribosomal subunit. During the assembly of the SSU processome in the nucleolus, many ribosome biogenesis factors, an RNA chaperone and ribosomal proteins associate with the nascent pre-rRNA and work in concert to generate RNA folding, modifications, rearrangements and cleavage as well as targeted degradation of pre-ribosomal RNA by the RNA exosome. This Homo sapiens (Human) protein is Something about silencing protein 10.